Here is a 470-residue protein sequence, read N- to C-terminus: Sugar transporter ERD6-like 8 (470 aa).

The span at 1-16 (METRKDDMEKRNDKSE) shows a compositional bias: basic and acidic residues. Residues 1-24 (METRKDDMEKRNDKSEPLLLPENG) form a disordered region. Helical transmembrane passes span 33–53 (WMVY…GTCV), 73–93 (QFSV…ITSG), 110–130 (VISA…PLDF), 133–153 (FLTG…IAEI), 164–184 (TLNQ…GAVV), 188–208 (TLAL…WFIP), 270–290 (FVIV…NGVI), 307–327 (GSIL…TLLI), 335–355 (LLMA…NSFL), 373–393 (GVLV…WVIM), 409–429 (VTVV…FLMI), and 434–454 (GTFY…AKLV).

Belongs to the major facilitator superfamily. Sugar transporter (TC 2.A.1.1) family.

The protein resides in the membrane. Sugar transporter. The chain is Sugar transporter ERD6-like 8 from Arabidopsis thaliana (Mouse-ear cress).